We begin with the raw amino-acid sequence, 92 residues long: Small ribosomal subunit protein uS19c (92 aa).

The protein belongs to the universal ribosomal protein uS19 family.

Its subcellular location is the plastid. The protein localises to the chloroplast. Its function is as follows. Protein S19 forms a complex with S13 that binds strongly to the 16S ribosomal RNA. The sequence is that of Small ribosomal subunit protein uS19c from Dioscorea elephantipes (Elephant's foot yam).